A 210-amino-acid polypeptide reads, in one-letter code: Mitochondrial coenzyme A diphosphatase NUDT8 (210 aa).

The 148-residue stretch at 25 to 172 (LRSRPAAAAV…HFSYTLPVFL (148 aa)) folds into the Nudix hydrolase domain. Position 70 is an N6-succinyllysine (lysine 70). The short motif at 70–91 (KCDPDDQDVIHTALRETQEELG) is the Nudix box element. Mg(2+) is bound by residues glutamate 85 and glutamate 89. Lysine 96 is modified (N6-succinyllysine).

The protein belongs to the Nudix hydrolase family. Monomer. The cofactor is Mg(2+). Mn(2+) is required as a cofactor. As to expression, expressed at the highest levels in the kidneys, heart, brown adipose tissue and liver (at protein level). Expressed at lower levels in the brain, skeletal muscle, and white adipose tissue (at protein level).

Its subcellular location is the mitochondrion. The enzyme catalyses an acyl-CoA + H2O = an acyl-4'-phosphopantetheine + adenosine 3',5'-bisphosphate + 2 H(+). The catalysed reaction is CoA + H2O = (R)-4'-phosphopantetheine + adenosine 3',5'-bisphosphate + 2 H(+). It catalyses the reaction acetyl-CoA + H2O = S-acetyl-4'-phosphopantetheine + adenosine 3',5'-bisphosphate + 2 H(+). It carries out the reaction butanoyl-CoA + H2O = S-butanoyl-4'-phosphopantetheine + adenosine 3',5'-bisphosphate + 2 H(+). The enzyme catalyses hexanoyl-CoA + H2O = hexanoyl-4'-phosphopantetheine + adenosine 3',5'-bisphosphate + 2 H(+). The catalysed reaction is octanoyl-CoA + H2O = S-octanoyl-4'-phosphopantetheine + adenosine 3',5'-bisphosphate + 2 H(+). It catalyses the reaction propanoyl-CoA + H2O = propanoyl-4'-phosphopantetheine + adenosine 3',5'-bisphosphate + 2 H(+). It carries out the reaction malonyl-CoA + H2O = malonyl-4'-phosphopantetheine + adenosine 3',5'-bisphosphate + 2 H(+). The enzyme catalyses succinyl-CoA + H2O = succinyl-4'-phosphopantetheine + adenosine 3',5'-bisphosphate + 2 H(+). The catalysed reaction is a 5'-end CoA-ribonucleoside in mRNA + H2O = a 5'-end phospho-adenosine-phospho-ribonucleoside in mRNA + (R)-4'-phosphopantetheine + 2 H(+). In terms of biological role, acyl-CoA diphosphatase that mediates the hydrolysis of a wide range of CoA and CoA esters yielding 3',5'-ADP and the corresponding 4'-phosphopantetheine derivative as products. Hydrolyzes short- and medium-chain acyl-CoAs, exhibiting the highest activity toward free CoA, hexanoyl-CoA, and octanoyl-CoA and the lowest activity against acetyl-CoA. Exhibits decapping activity towards dpCoA-capped RNAs in vitro. This Mus musculus (Mouse) protein is Mitochondrial coenzyme A diphosphatase NUDT8 (Nudt8).